Here is a 124-residue protein sequence, read N- to C-terminus: Large ribosomal subunit protein uL22 (124 aa).

Belongs to the universal ribosomal protein uL22 family. In terms of assembly, part of the 50S ribosomal subunit.

In terms of biological role, this protein binds specifically to 23S rRNA; its binding is stimulated by other ribosomal proteins, e.g. L4, L17, and L20. It is important during the early stages of 50S assembly. It makes multiple contacts with different domains of the 23S rRNA in the assembled 50S subunit and ribosome. The globular domain of the protein is located near the polypeptide exit tunnel on the outside of the subunit, while an extended beta-hairpin is found that lines the wall of the exit tunnel in the center of the 70S ribosome. This chain is Large ribosomal subunit protein uL22, found in Campylobacter lari (strain RM2100 / D67 / ATCC BAA-1060).